A 684-amino-acid chain; its full sequence is Cyclic nucleotide-gated channel alpha-1 (684 aa).

Residues 1–161 (MKTNIINTWH…PSGNTYYNWL (161 aa)) are Cytoplasmic-facing. Residues 34-145 (ACSSFSDDDN…TKEKKEEEKK (112 aa)) form a disordered region. Residues 39 to 54 (SDDDNGSLSEESENED) are compositionally biased toward acidic residues. The segment covering 105–145 (SKADDKNENKKDPEKKKKKEKEKEKKKKEEKTKEKKEEEKK) has biased composition (basic and acidic residues). Residues 162–183 (FCITLPVMYNWTMIIARACFDE) traverse the membrane as a helical segment. Topologically, residues 184 to 193 (LQSDYLEYWL) are extracellular. A helical membrane pass occupies residues 194–214 (IFDYVSDVVYLADMFVRTRTG). Topologically, residues 215 to 239 (YLEQGLLVKDRMKLIEKYKANLQFK) are cytoplasmic. Residues 240 to 258 (LDVLSVIPTDLLYIKFGWN) traverse the membrane as a helical segment. The Extracellular segment spans residues 259-263 (YPEIR). Residues 264–282 (LNRLLRISRMFEFFQRTET) form a helical membrane-spanning segment. The Cytoplasmic portion of the chain corresponds to 283–289 (RTNYPNI). An ion conduction pathway region spans residues 287–395 (PNIFRISNLV…GNIGSMISNM (109 aa)). The chain crosses the membrane as a helical span at residues 290-313 (FRISNLVMYIVIIIHWNACVYYSI). The Extracellular segment spans residues 314 to 336 (SKAIGFGNDTWVYPDVNDPEFGR). N-linked (GlcNAc...) asparagine glycosylation occurs at N321. Helical transmembrane passes span 337–371 (LARK…IFVV) and 372–396 (VDFL…SNMN). The interval 354–357 (TIGE) is selectivity filter. Positions 397-473 (AARAEFQSRV…DTLKKVRIFA (77 aa)) are C-linker. The Cytoplasmic segment spans residues 397–684 (AARAEFQSRV…ESELTESLQD (288 aa)). Residues 477–597 (AGLLVELVLK…EEKGRQILMK (121 aa)) are cyclic nucleotide-binding domain. 4 residues coordinate 3',5'-cyclic GMP: G537, S540, R553, and T554. Residues R553 and T554 each coordinate 3',5'-cyclic AMP. Residues 615 to 669 (LEEKVTRMEGSVDLLQTRFARILAEYESMQQKLKQRLTKVEKFLKPLIETEFSAL) are a coiled coil.

Belongs to the cyclic nucleotide-gated cation channel (TC 1.A.1.5) family. CNGA1 subfamily. As to quaternary structure, forms heterotetrameric channels composed of CNGA1 and CNGB1 subunits with 3:1 stoichiometry. May also form cyclic nucleotide-activated homotetrameric channels, that are efficiently activated by saturating cGMP, but poorly activated by saturating cAMP compared to the heterotetramer with CNGB1. The channel binds Ca(2+)-bound CALM1 via CaM1 and CaM2 regions of the CNGB1 subunit; this interaction modulates the affinity of the channel for cNMPs in response to intracellular Ca(2+) levels. As to expression, rod cells in the retina and inner medulla of kidney.

It is found in the cell membrane. The enzyme catalyses Ca(2+)(in) = Ca(2+)(out). It carries out the reaction Na(+)(in) = Na(+)(out). It catalyses the reaction K(+)(in) = K(+)(out). The catalysed reaction is NH4(+)(in) = NH4(+)(out). The enzyme catalyses Rb(+)(in) = Rb(+)(out). It carries out the reaction Li(+)(in) = Li(+)(out). It catalyses the reaction Cs(+)(in) = Cs(+)(out). In terms of biological role, pore-forming subunit of the rod cyclic nucleotide-gated channel. Mediates rod photoresponses at dim light converting transient changes in intracellular cGMP levels into electrical signals. In the dark, cGMP levels are high and keep the channel open enabling a steady inward current carried by Na(+) and Ca(2+) ions that leads to membrane depolarization and neurotransmitter release from synaptic terminals. Upon photon absorption cGMP levels decline leading to channel closure and membrane hyperpolarization that ultimately slows neurotransmitter release and signals the presence of light, the end point of the phototransduction cascade. Conducts cGMP- and cAMP-gated ion currents, with permeability for monovalent and divalent cations. The selectivity for Ca(2+) over Na(+) increases with cGMP concentrations, whereas the selectivity among monovalent ions is independent of the cGMP levels. In Mus musculus (Mouse), this protein is Cyclic nucleotide-gated channel alpha-1 (Cnga1).